Here is a 214-residue protein sequence, read N- to C-terminus: Cytochrome c biogenesis ATP-binding export protein CcmA (214 aa).

The region spanning 4–214 is the ABC transporter domain; sequence LAVDQLTVSR…FDHGFDGAFL (211 aa). 36–43 is an ATP binding site; it reads GPNGIGKT.

Belongs to the ABC transporter superfamily. CcmA exporter (TC 3.A.1.107) family. The complex is composed of two ATP-binding proteins (CcmA) and two transmembrane proteins (CcmB).

It is found in the cell inner membrane. The catalysed reaction is heme b(in) + ATP + H2O = heme b(out) + ADP + phosphate + H(+). Part of the ABC transporter complex CcmAB involved in the biogenesis of c-type cytochromes; once thought to export heme, this seems not to be the case, but its exact role is uncertain. Responsible for energy coupling to the transport system. This Rhodobacter capsulatus (strain ATCC BAA-309 / NBRC 16581 / SB1003) protein is Cytochrome c biogenesis ATP-binding export protein CcmA.